Reading from the N-terminus, the 128-residue chain is Large ribosomal subunit protein bL21 (128 aa).

A disordered region spans residues 104 to 128 (GKSPSVGPRPKRVKAEPAPAADAAE). Residues 119–128 (EPAPAADAAE) are compositionally biased toward low complexity.

Belongs to the bacterial ribosomal protein bL21 family. As to quaternary structure, part of the 50S ribosomal subunit. Contacts protein L20.

Its function is as follows. This protein binds to 23S rRNA in the presence of protein L20. The chain is Large ribosomal subunit protein bL21 from Rhodopseudomonas palustris (strain HaA2).